A 431-amino-acid polypeptide reads, in one-letter code: 3-isopropylmalate dehydratase large subunit (431 aa).

Residues Cys300, Cys360, and Cys363 each coordinate [4Fe-4S] cluster.

Belongs to the aconitase/IPM isomerase family. LeuC type 2 subfamily. In terms of assembly, heterodimer of LeuC and LeuD. [4Fe-4S] cluster is required as a cofactor.

It carries out the reaction (2R,3S)-3-isopropylmalate = (2S)-2-isopropylmalate. Its pathway is amino-acid biosynthesis; L-leucine biosynthesis; L-leucine from 3-methyl-2-oxobutanoate: step 2/4. Functionally, catalyzes the isomerization between 2-isopropylmalate and 3-isopropylmalate, via the formation of 2-isopropylmaleate. This is 3-isopropylmalate dehydratase large subunit from Sulfurihydrogenibium sp. (strain YO3AOP1).